The chain runs to 90 residues: Probable Fe(2+)-trafficking protein (90 aa).

This sequence belongs to the Fe(2+)-trafficking protein family.

Its function is as follows. Could be a mediator in iron transactions between iron acquisition and iron-requiring processes, such as synthesis and/or repair of Fe-S clusters in biosynthetic enzymes. This is Probable Fe(2+)-trafficking protein from Pseudoalteromonas atlantica (strain T6c / ATCC BAA-1087).